Consider the following 239-residue polypeptide: 7-cyano-7-deazaguanine synthase (239 aa).

13 to 23 lines the ATP pocket; the sequence is LSGGLDSMVTA. Zn(2+)-binding residues include Cys193, Cys203, Cys206, and Cys209.

This sequence belongs to the QueC family. The cofactor is Zn(2+).

It carries out the reaction 7-carboxy-7-deazaguanine + NH4(+) + ATP = 7-cyano-7-deazaguanine + ADP + phosphate + H2O + H(+). It participates in purine metabolism; 7-cyano-7-deazaguanine biosynthesis. Functionally, catalyzes the ATP-dependent conversion of 7-carboxy-7-deazaguanine (CDG) to 7-cyano-7-deazaguanine (preQ(0)). The polypeptide is 7-cyano-7-deazaguanine synthase (Erythrobacter litoralis (strain HTCC2594)).